A 440-amino-acid chain; its full sequence is Xylose isomerase (440 aa).

Residues histidine 100 and aspartate 103 contribute to the active site. The Mg(2+) site is built by glutamate 231, glutamate 267, histidine 270, aspartate 295, aspartate 306, aspartate 308, and aspartate 338.

Belongs to the xylose isomerase family. As to quaternary structure, homotetramer. Requires Mg(2+) as cofactor.

The protein localises to the cytoplasm. The catalysed reaction is alpha-D-xylose = alpha-D-xylulofuranose. The protein is Xylose isomerase of Burkholderia multivorans (strain ATCC 17616 / 249).